The chain runs to 138 residues: Cysteine desulfuration protein SufE (138 aa).

Residue cysteine 51 is the Cysteine persulfide intermediate of the active site.

It belongs to the SufE family. Homodimer. Interacts with SufS.

Its subcellular location is the cytoplasm. It functions in the pathway cofactor biosynthesis; iron-sulfur cluster biosynthesis. Functionally, participates in cysteine desulfuration mediated by SufS. Cysteine desulfuration mobilizes sulfur from L-cysteine to yield L-alanine and constitutes an essential step in sulfur metabolism for biosynthesis of a variety of sulfur-containing biomolecules. Functions as a sulfur acceptor for SufS, by mediating the direct transfer of the sulfur atom from the S-sulfanylcysteine of SufS, an intermediate product of cysteine desulfuration process. The protein is Cysteine desulfuration protein SufE of Klebsiella pneumoniae (strain 342).